Reading from the N-terminus, the 312-residue chain is Taste receptor type 2 member 9 (312 aa).

Over 1-9 the chain is Extracellular; sequence MPSAIEAIY. A helical membrane pass occupies residues 10–32; the sequence is IILIAGELTIGIWGNGFIVLVNC. Residues 33–52 are Cytoplasmic-facing; sequence XDWLKRRDISLIDIILISLA. The chain crosses the membrane as a helical span at residues 53–72; it reads ISRICLLCVISLDGFFMLLF. The Extracellular portion of the chain corresponds to 73 to 86; the sequence is PGTYGNSVLVSIVN. Residues 87-109 traverse the membrane as a helical segment; it reads VVWTFANNSSLWFTSCLSIFYLL. The Cytoplasmic segment spans residues 110 to 128; sequence KIANISHPFFFWLKLKINK. Residues 129-146 form a helical membrane-spanning segment; it reads VMLAILLGSFLISLIISV. Over 147–180 the chain is Extracellular; it reads XKNDDMWYHLFKVSXEENITWEFKVSKIPGTFKQ. N-linked (GlcNAc...) asparagine glycosylation occurs at Asn164. A helical transmembrane segment spans residues 181 to 203; the sequence is LTLNLGGRVPFILCLISFFLLLF. Residues 204 to 234 are Cytoplasmic-facing; that stretch reads SLVRHTKQIQLHATGFRDPSTEAHMRAIKAV. Residues 235–257 form a helical membrane-spanning segment; that stretch reads IIFLLLLIVYYPVFLVMTSSALI. Residues 258–261 are Extracellular-facing; it reads PQGK. The chain crosses the membrane as a helical span at residues 262–284; sequence LVLMIGDIVTVIFPSSHSFILIM. Residues 285–312 are Cytoplasmic-facing; it reads GNSKLREAFLKMLRFVKGFLRRRKPFVP.

It belongs to the G-protein coupled receptor T2R family.

It is found in the membrane. Its function is as follows. Gustducin-coupled receptor implicated in the perception of bitter compounds in the oral cavity and the gastrointestinal tract. Signals through PLCB2 and the calcium-regulated cation channel TRPM5. This is Taste receptor type 2 member 9 (TAS2R9) from Pan troglodytes (Chimpanzee).